The primary structure comprises 277 residues: Myelin proteolipid protein (277 aa).

Topologically, residues 1 to 10 (MGLLECCARC) are cytoplasmic. 3 S-palmitoyl cysteine lipidation sites follow: cysteine 6, cysteine 7, and cysteine 10. A helical transmembrane segment spans residues 11–36 (LVGAPFASLVATGLCFFGVALFCGCG). Topologically, residues 37–59 (HEALTGTEKLIETYFSKNYQDYE) are extracellular. A helical transmembrane segment spans residues 60–88 (YLINVIHAFQYVIYGTASFFFLYGALLLA). Residues 89–151 (EGFYTTGAVR…LGKWLGHPDK (63 aa)) lie on the Cytoplasmic side of the membrane. Cysteine 109 carries the S-palmitoyl cysteine lipid modification. Serine 114 is subject to Phosphoserine. Threonine 116 and threonine 118 each carry phosphothreonine. Cysteine 141 is lipidated: S-palmitoyl cysteine. The helical transmembrane segment at 152-178 (FVGITYALTVVWLLVFACSAVPVYIYF) threads the bilayer. Residues 179–238 (NTWTTCQSIAFPSKTSASIGSLCADARMYGVLPWNAFPGKVCGSNLLSICKTAEFQMTFH) are Extracellular-facing. Disulfide bonds link cysteine 184–cysteine 228 and cysteine 201–cysteine 220. The O-palmitoyl serine moiety is linked to residue serine 199. Residues 239 to 268 (LFIAAFVGAAATLISLLTFMIAATYNFAVL) form a helical membrane-spanning segment. The Cytoplasmic portion of the chain corresponds to 269–277 (KLMGRGTKF).

This sequence belongs to the myelin proteolipid protein family.

Its subcellular location is the cell membrane. It is found in the myelin membrane. In terms of biological role, this is the major myelin protein from the central nervous system. It plays an important role in the formation or maintenance of the multilamellar structure of myelin. The protein is Myelin proteolipid protein (PLP1) of Macaca fascicularis (Crab-eating macaque).